Reading from the N-terminus, the 225-residue chain is UPF0758 protein NMCC_1157 (225 aa).

An MPN domain is found at 102-224 (VLSDPDTVAD…VRSFRQLGLM (123 aa)). The Zn(2+) site is built by His173, His175, and Asp186. The JAMM motif motif lies at 173–186 (HNHPGGSPEPSQED).

Belongs to the UPF0758 family.

In Neisseria meningitidis serogroup C (strain 053442), this protein is UPF0758 protein NMCC_1157.